Reading from the N-terminus, the 315-residue chain is MSQPTPAVRTFQDLILALQNYWAAQGCVVLQPYDMEVGAGTFHTATFLRAVGPETWNAAYVQPSRRPADGRYGENPNRLQHYYQFQVVLKPNPANFQELYLGSLKAIGLDPLVHDIRFVEDNWESPTLGAWGLGWEIWLNGMEVTQFTYFQQVGGIECYPVTGEITYGLERLAMYIQGVDSVYDLVWADGPFGKVTYGDVFHQNEVEQSTYNFEHANVDKLFELFDFYESEANRLIKLDLPLPTYEMVLKASHTFNLLDARRAISVTERQRYILRVRTLARDVAQSYLQARARLGFPMATPELRDEVLAKLEAAQ.

Belongs to the class-II aminoacyl-tRNA synthetase family. Tetramer of two alpha and two beta subunits.

It localises to the cytoplasm. The catalysed reaction is tRNA(Gly) + glycine + ATP = glycyl-tRNA(Gly) + AMP + diphosphate. The chain is Glycine--tRNA ligase alpha subunit from Pseudomonas putida (strain GB-1).